A 212-amino-acid polypeptide reads, in one-letter code: Soluble inorganic pyrophosphatase 1 (212 aa).

Substrate contacts are provided by K62 and R76. The Proton donor role is filled by Y84. Y88 contacts substrate. Mg(2+) contacts are provided by D98, D103, and D135. Y172 contributes to the substrate binding site.

Belongs to the PPase family. As to quaternary structure, monomer. It depends on Mg(2+) as a cofactor. In terms of tissue distribution, ubiquitous. Lower level of expression in ovary, stigma and pollen.

Its subcellular location is the cytoplasm. It catalyses the reaction diphosphate + H2O = 2 phosphate + H(+). With respect to regulation, inhibited by Zn(2+), Ca(2+), Ba(2+), Fe(2+), Co(2+), Cu(2+), Eu(2+), Eu(3+) and Mn(2+). Functionally, catalyzes the irreversible hydrolysis of pyrophosphate (PPi) to phosphate. The MgPPi(2-) complex binds to the enzyme only after a free Mg(2+) ion has bound. No activity with glycerol-3-phosphate, glucose-6-phosphate, p-nitrophenylphosphate, ADP, NADP(+), NAD(+),NADH, NADPH or phosphoribosyl pyrophosphate as substrates. Controls the equilibrium of gluconeogenic reactions in the heterotrophic growth phase of early seedling establishment. Determinates the rate of cytosolic glycolysis, providing carbon for seed storage lipid accumulation. This Arabidopsis thaliana (Mouse-ear cress) protein is Soluble inorganic pyrophosphatase 1.